Consider the following 407-residue polypeptide: Cytochrome P450-pinF2, plant-inducible (407 aa).

Residue Cys356 coordinates heme.

The protein belongs to the cytochrome P450 family. It depends on heme as a cofactor.

Functionally, not essential for virulence, but may be involved in the detoxification of plant protective agents at the site of wounding. The sequence is that of Cytochrome P450-pinF2, plant-inducible (cyp104) from Rhizobium radiobacter (Agrobacterium tumefaciens).